A 533-amino-acid polypeptide reads, in one-letter code: Probable RNA-binding protein 46 (533 aa).

3 RRM domains span residues 61-139 (CEVF…VSLD), 141-223 (CRLF…WADP), and 236-308 (KVLY…LAKP).

As to quaternary structure, interacts with YTHDC2, MEIOC, MOV10, CNOT6L, DDX4, UPF1 and PABPC1.

The protein resides in the cytoplasm. In terms of biological role, essential for male and female fertility, playing a crucial role in regulating germ cell development by ensuring the proper progression of meiosis prophase I. Regulates mitotic-to-meiotic transition in spermatogenesis by forming a complex with MEIOC and YTHDC2 which recognizes and down-regulates mitotic transcripts for a successful meiotic entry. Required for normal synaptonemal complex formation during meiosis, binding meiotic cohesin subunit mRNAs containing GCCUAU/GUUCGA motifs in their 3'UTRs regions and positively regulating their translation. Required for spermatogonial differentiation in both developing and adult testis. The sequence is that of Probable RNA-binding protein 46 (RBM46) from Homo sapiens (Human).